A 227-amino-acid chain; its full sequence is Cytochrome c oxidase subunit 2 (227 aa).

Residues 1–14 (MAHPVQLSLQDATS) lie on the Mitochondrial intermembrane side of the membrane. The helical transmembrane segment at 15–45 (PVMEELITFHDHAFMAMSLISFLVLYALLST) threads the bilayer. Over 46–59 (LTTKLTNTSITDAQ) the chain is Mitochondrial matrix. Residues 60-87 (EMETIWTILPAIILILIALPSLRILYLT) traverse the membrane as a helical segment. At 88–227 (DEVNDPSFTI…IFEMGPVLTL (140 aa)) the chain is on the mitochondrial intermembrane side. Residues H161, C196, E198, C200, H204, and M207 each contribute to the Cu cation site. Position 198 (E198) interacts with Mg(2+).

The protein belongs to the cytochrome c oxidase subunit 2 family. In terms of assembly, component of the cytochrome c oxidase (complex IV, CIV), a multisubunit enzyme composed of 14 subunits. The complex is composed of a catalytic core of 3 subunits MT-CO1, MT-CO2 and MT-CO3, encoded in the mitochondrial DNA, and 11 supernumerary subunits COX4I, COX5A, COX5B, COX6A, COX6B, COX6C, COX7A, COX7B, COX7C, COX8 and NDUFA4, which are encoded in the nuclear genome. The complex exists as a monomer or a dimer and forms supercomplexes (SCs) in the inner mitochondrial membrane with NADH-ubiquinone oxidoreductase (complex I, CI) and ubiquinol-cytochrome c oxidoreductase (cytochrome b-c1 complex, complex III, CIII), resulting in different assemblies (supercomplex SCI(1)III(2)IV(1) and megacomplex MCI(2)III(2)IV(2)). Found in a complex with TMEM177, COA6, COX18, COX20, SCO1 and SCO2. Interacts with TMEM177 in a COX20-dependent manner. Interacts with COX20. Interacts with COX16. Cu cation is required as a cofactor.

The protein resides in the mitochondrion inner membrane. The enzyme catalyses 4 Fe(II)-[cytochrome c] + O2 + 8 H(+)(in) = 4 Fe(III)-[cytochrome c] + 2 H2O + 4 H(+)(out). Functionally, component of the cytochrome c oxidase, the last enzyme in the mitochondrial electron transport chain which drives oxidative phosphorylation. The respiratory chain contains 3 multisubunit complexes succinate dehydrogenase (complex II, CII), ubiquinol-cytochrome c oxidoreductase (cytochrome b-c1 complex, complex III, CIII) and cytochrome c oxidase (complex IV, CIV), that cooperate to transfer electrons derived from NADH and succinate to molecular oxygen, creating an electrochemical gradient over the inner membrane that drives transmembrane transport and the ATP synthase. Cytochrome c oxidase is the component of the respiratory chain that catalyzes the reduction of oxygen to water. Electrons originating from reduced cytochrome c in the intermembrane space (IMS) are transferred via the dinuclear copper A center (CU(A)) of subunit 2 and heme A of subunit 1 to the active site in subunit 1, a binuclear center (BNC) formed by heme A3 and copper B (CU(B)). The BNC reduces molecular oxygen to 2 water molecules using 4 electrons from cytochrome c in the IMS and 4 protons from the mitochondrial matrix. This chain is Cytochrome c oxidase subunit 2 (MT-CO2), found in Macaca mulatta (Rhesus macaque).